Reading from the N-terminus, the 728-residue chain is Ophiobolin F synthase oblA (728 aa).

Positions 1 to 322 (MEYKYSTIVD…RYHFPGRWNE (322 aa)) are (7Z)-ophiobola-7,19-dien-3-ol synthase. The Mg(2+) site is built by Asp-93 and Asp-97. Asp-93 contributes to the substrate binding site. The DDXXD 1 signature appears at 93-97 (DDEID). Residues 182 to 185 (RCMD), Asn-226, 230 to 234 (SYEKE), and 313 to 314 (RY) contribute to the substrate site. The NSE/DTE motif lies at 226 to 234 (NDLFSYEKE). The tract at residues 323-728 (LQKLRAEHGI…LRLMVDMLKV (406 aa)) is geranylfarnesyl diphosphate synthase. The span at 362-371 (GINGTNGVNG) shows a compositional bias: low complexity. Residues 362–394 (GINGTNGVNGKRNRDEDGDENDARINGNGFKKP) are disordered. Isopentenyl diphosphate contacts are provided by Lys-439, Arg-442, and His-471. Mg(2+)-binding residues include Asp-478 and Asp-482. The DDXXD 2 motif lies at 478–482 (DDIED). Arg-487 serves as a coordination point for dimethylallyl diphosphate. Arg-488 contributes to the isopentenyl diphosphate binding site. Dimethylallyl diphosphate contacts are provided by Lys-565, Thr-566, Gln-604, Asn-611, Lys-621, and Lys-631.

It in the N-terminal section; belongs to the terpene synthase family. The protein in the C-terminal section; belongs to the FPP/GGPP synthase family. Requires Mg(2+) as cofactor.

It carries out the reaction isopentenyl diphosphate + (2E,6E)-farnesyl diphosphate = (2E,6E,10E)-geranylgeranyl diphosphate + diphosphate. The catalysed reaction is isopentenyl diphosphate + (2E,6E,10E)-geranylgeranyl diphosphate = (2E,6E,10E,14E)-geranylfarnesyl diphosphate + diphosphate. The enzyme catalyses (2E,6E,10E,14E)-geranylfarnesyl diphosphate + H2O = ophiobolin F + diphosphate. Its pathway is secondary metabolite biosynthesis; terpenoid biosynthesis. In terms of biological role, bifunctional sesterterpene synthase; part of the gene cluster that mediates the biosynthesis of the sesterterpenes ophiobolins, fungal phytotoxins with potential anti-cancer activities. The first step of the pathway is performed by the sesterterpene synthase oblA that possesses both prenyl transferase and terpene cyclase activity, converting isopentenyl diphosphate and dimethylallyl diphosphate into geranylfarnesyl diphosphate (GFPP) and further converting GFPP into ophiobolin F, respectively. Other sesterterpenoids (C(25) terpenoids) are found as minor products of oblA. The cytochrome P450 monooxygenase oblB then catalyzes a four-step oxidative transformation of ophiobolin F to yield ophiobolin C. The function of the cytochrome P450 monooxygenase oblE has still to be determined. The protein is Ophiobolin F synthase oblA of Emericella variicolor (Aspergillus stellatus).